Consider the following 645-residue polypeptide: Octopamine receptor Oamb (645 aa).

The Extracellular portion of the chain corresponds to 1 to 25 (MNETECEDLIKSVKWTEPANLISLA). N-linked (GlcNAc...) asparagine glycosylation occurs at N2. Residues 26 to 46 (VLEFINVLVIGGNCLVIAAVF) form a helical membrane-spanning segment. The Cytoplasmic segment spans residues 47 to 56 (CSNKLRSVTN). A helical membrane pass occupies residues 57 to 77 (FFIVNLAVADLLVGLAVLPFS). Topologically, residues 78 to 94 (ATWEVFKVWIFGDLWCR) are extracellular. An intrachain disulfide couples C93 to C287. The helical transmembrane segment at 95–115 (IWLAVDVWMCTASILNLCAIS) threads the bilayer. Residues 116–138 (LDRYVAVTRPVTYPSIMSTKKAK) lie on the Cytoplasmic side of the membrane. A helical membrane pass occupies residues 139–159 (SLIAGIWVLSFFICFPPLVGW). At 160 to 295 (KDQKAVIQPT…KCELTNDRGY (136 aa)) the chain is on the extracellular side. An N-linked (GlcNAc...) asparagine glycan is attached at N174. A disordered region spans residues 190-212 (QLGLDSIKDQGEASLPPSPPHIG). A helical transmembrane segment spans residues 296 to 316 (VLYSALGSFYIPMFVMLFFYW). Topologically, residues 317-520 (RIYRAAVRTT…FRMETKAAKT (204 aa)) are cytoplasmic. Disordered regions lie at residues 358–386 (GRGS…PSPE) and 479–500 (RQSN…KKMG). A compositionally biased stretch (low complexity) spans 369–385 (SNGSTQSTTTTLGTPSP). The helical transmembrane segment at 521–541 (LAIIVGMFIFCWCPFFTMYII) threads the bilayer. Topologically, residues 542–551 (RPFCQDCVDP) are extracellular. A helical transmembrane segment spans residues 552–572 (LLFSVLFWLGYCNSAVNPMIY). Residues 573-645 (ALFSKDFRFA…HHSEMSNDPR (73 aa)) are Cytoplasmic-facing. The disordered stretch occupies residues 621–645 (TPSAAAHSFGDESELHHSEMSNDPR). Over residues 629–645 (FGDESELHHSEMSNDPR) the composition is skewed to basic and acidic residues.

The protein belongs to the G-protein coupled receptor 1 family. Highly enriched in mushroom body neuropil and in the ellipsoid body (at protein level). Expressed in oviduct epithelium (at protein level). Expressed in the adult and larval brain, thoracic and abdominal ganglia, terminal cells of the larval tracheal system, muscle, mature eggs and reproductive system.

Its subcellular location is the cell membrane. Its function is as follows. Receptor for octopamine (OA) which is a neurotransmitter, neurohormone and neuromodulator in invertebrates. Stimulates intracellular accumulation of cAMP and Ca(2+) following ligand binding. Required for ovulation. Following activation on mature follicle cells by OA, induces activity of the metalloprotease Mmp2 which leads to breakdown of the posterior follicle wall, resulting in ovulation. Ligand binding probably also leads to activation of CamKII which is also required for ovulation. Modulates sleep/wake behavior by acting in neurons of the pars intercerebralis to promote wakefulness. Plays a role in courtship conditioning where the courtship behavior of males rejected by already mated females is inhibited with further females. Required in the mushroom body for appetitive olfactory learning. Specifically conveys the short-term reinforcing effects of sweet taste. In insulin-producing cells of the brain, plays a role in inhibiting transcription of insulin-like peptide Ilp3. Also plays a role in social behavior by modulating male agression. This is Octopamine receptor Oamb from Drosophila melanogaster (Fruit fly).